Consider the following 507-residue polypeptide: Ribosomal protein uS12 methylthiotransferase RimO (507 aa).

Residues 13–124 (RRVALLTLGC…ISDRLGAVLA (112 aa)) form the MTTase N-terminal domain. Positions 22, 58, and 87 each coordinate [4Fe-4S] cluster. The tract at residues 150–175 (AAVSLPGHGTRAAAAGPGGRSAPVEV) is disordered. Residues 155 to 172 (PGHGTRAAAAGPGGRSAP) show a composition bias toward low complexity. The Radical SAM core domain occupies 191 to 422 (LDTGPVASLK…ALADELCAQR (232 aa)). The [4Fe-4S] cluster site is built by Cys-205, Cys-209, and Cys-212. Residues 424–497 (EQRLGSTVQV…GVDLVAVPDG (74 aa)) enclose the TRAM domain.

This sequence belongs to the methylthiotransferase family. RimO subfamily. [4Fe-4S] cluster serves as cofactor.

The protein resides in the cytoplasm. The enzyme catalyses L-aspartate(89)-[ribosomal protein uS12]-hydrogen + (sulfur carrier)-SH + AH2 + 2 S-adenosyl-L-methionine = 3-methylsulfanyl-L-aspartate(89)-[ribosomal protein uS12]-hydrogen + (sulfur carrier)-H + 5'-deoxyadenosine + L-methionine + A + S-adenosyl-L-homocysteine + 2 H(+). Its function is as follows. Catalyzes the methylthiolation of an aspartic acid residue of ribosomal protein uS12. This chain is Ribosomal protein uS12 methylthiotransferase RimO, found in Salinispora arenicola (strain CNS-205).